A 303-amino-acid polypeptide reads, in one-letter code: Glycine--tRNA ligase alpha subunit (303 aa).

This sequence belongs to the class-II aminoacyl-tRNA synthetase family. In terms of assembly, tetramer of two alpha and two beta subunits.

Its subcellular location is the cytoplasm. It catalyses the reaction tRNA(Gly) + glycine + ATP = glycyl-tRNA(Gly) + AMP + diphosphate. The protein is Glycine--tRNA ligase alpha subunit of Salmonella agona (strain SL483).